The chain runs to 488 residues: Ribulose bisphosphate carboxylase large chain (488 aa).

Substrate is bound by residues Asn127 and Thr177. Catalysis depends on Lys179, which acts as the Proton acceptor. A substrate-binding site is contributed by Lys181. Residues Lys205, Asp207, and Glu208 each contribute to the Mg(2+) site. The residue at position 205 (Lys205) is an N6-carboxylysine. The Proton acceptor role is filled by His297. Residues Arg298, His330, and Ser382 each coordinate substrate.

The protein belongs to the RuBisCO large chain family. Type I subfamily. As to quaternary structure, heterohexadecamer of 8 large chains and 8 small chains. Mg(2+) serves as cofactor.

Its subcellular location is the plastid. The protein localises to the chloroplast. It carries out the reaction 2 (2R)-3-phosphoglycerate + 2 H(+) = D-ribulose 1,5-bisphosphate + CO2 + H2O. The catalysed reaction is D-ribulose 1,5-bisphosphate + O2 = 2-phosphoglycolate + (2R)-3-phosphoglycerate + 2 H(+). Its function is as follows. RuBisCO catalyzes two reactions: the carboxylation of D-ribulose 1,5-bisphosphate, the primary event in carbon dioxide fixation, as well as the oxidative fragmentation of the pentose substrate in the photorespiration process. Both reactions occur simultaneously and in competition at the same active site. This Porphyra purpurea (Red seaweed) protein is Ribulose bisphosphate carboxylase large chain.